Reading from the N-terminus, the 368-residue chain is Homoserine O-acetyltransferase (368 aa).

Residues 44 to 350 form the AB hydrolase-1 domain; it reads NAILVAHAWT…AYGHDAFLLE (307 aa). The active-site Nucleophile is the Ser150. Arg217 provides a ligand contact to substrate. Catalysis depends on residues Asp311 and His344. Residue Asp345 participates in substrate binding.

This sequence belongs to the AB hydrolase superfamily. MetX family. Homodimer.

The protein resides in the cytoplasm. It carries out the reaction L-homoserine + acetyl-CoA = O-acetyl-L-homoserine + CoA. The protein operates within amino-acid biosynthesis; L-methionine biosynthesis via de novo pathway; O-acetyl-L-homoserine from L-homoserine: step 1/1. Transfers an acetyl group from acetyl-CoA to L-homoserine, forming acetyl-L-homoserine. This Geobacter sulfurreducens (strain ATCC 51573 / DSM 12127 / PCA) protein is Homoserine O-acetyltransferase.